The primary structure comprises 92 residues: MANIKSQKKRIRQNEKARLRNKAVKSSLKTAIRKFREAAEAGNVEEAIILQRAAARQLDKAVSKGVIHKNQAANRKSAIAKRLHQLQQSQAA.

Basic residues predominate over residues 1 to 11 (MANIKSQKKRI). Positions 1-22 (MANIKSQKKRIRQNEKARLRNK) are disordered.

The protein belongs to the bacterial ribosomal protein bS20 family.

In terms of biological role, binds directly to 16S ribosomal RNA. This is Small ribosomal subunit protein bS20 from Thermobifida fusca (strain YX).